A 155-amino-acid chain; its full sequence is 3-dehydroquinate dehydratase 1 (155 aa).

Tyrosine 28 serves as the catalytic Proton acceptor. Substrate contacts are provided by asparagine 80, histidine 86, and aspartate 93. The active-site Proton donor is the histidine 106. Substrate-binding positions include 107–108 (VT) and arginine 117.

Belongs to the type-II 3-dehydroquinase family. Homododecamer.

The catalysed reaction is 3-dehydroquinate = 3-dehydroshikimate + H2O. The protein operates within metabolic intermediate biosynthesis; chorismate biosynthesis; chorismate from D-erythrose 4-phosphate and phosphoenolpyruvate: step 3/7. Catalyzes a trans-dehydration via an enolate intermediate. The chain is 3-dehydroquinate dehydratase 1 (aroQ1) from Bradyrhizobium diazoefficiens (strain JCM 10833 / BCRC 13528 / IAM 13628 / NBRC 14792 / USDA 110).